The following is a 94-amino-acid chain: DNA-directed RNA polymerase subunit omega (94 aa).

The protein belongs to the RNA polymerase subunit omega family. As to quaternary structure, the RNAP catalytic core consists of 2 alpha, 1 beta, 1 beta' and 1 omega subunit. When a sigma factor is associated with the core the holoenzyme is formed, which can initiate transcription.

The enzyme catalyses RNA(n) + a ribonucleoside 5'-triphosphate = RNA(n+1) + diphosphate. Promotes RNA polymerase assembly. Latches the N- and C-terminal regions of the beta' subunit thereby facilitating its interaction with the beta and alpha subunits. In Limosilactobacillus fermentum (strain NBRC 3956 / LMG 18251) (Lactobacillus fermentum), this protein is DNA-directed RNA polymerase subunit omega.